The primary structure comprises 1495 residues: Chromosome partition protein MukB (1495 aa).

60 to 67 (GGNGAGKS) is a binding site for ATP. Coiled coils occupy residues 322–693 (RART…SQPD), 861–1140 (EDVM…AKVS), and 1233–1289 (IDAI…LQNI). Residues 692–809 (PDGSEDARLN…EIPLFGRAAR (118 aa)) form a flexible hinge region.

It belongs to the SMC family. MukB subfamily. As to quaternary structure, homodimerization via its hinge domain. Binds to DNA via its C-terminal region. Interacts, and probably forms a ternary complex, with MukE and MukF via its C-terminal region. The complex formation is stimulated by calcium or magnesium. Interacts with tubulin-related protein FtsZ.

The protein resides in the cytoplasm. It localises to the nucleoid. Functionally, plays a central role in chromosome condensation, segregation and cell cycle progression. Functions as a homodimer, which is essential for chromosome partition. Involved in negative DNA supercoiling in vivo, and by this means organize and compact chromosomes. May achieve or facilitate chromosome segregation by condensation DNA from both sides of a centrally located replisome during cell division. In Pasteurella multocida (strain Pm70), this protein is Chromosome partition protein MukB.